Consider the following 367-residue polypeptide: Putative zinc metalloprotease mll0638 (367 aa).

Residue H20 coordinates Zn(2+). The active site involves E21. H24 is a binding site for Zn(2+). The next 3 membrane-spanning stretches (helical) occupy residues 108–130 (ATVV…VLFA), 291–313 (LGFE…LNLL), and 343–365 (MAYR…NDLF). Positions 121–196 (TIVVFSVLFA…ITFVMLRDGK (76 aa)) constitute a PDZ domain.

This sequence belongs to the peptidase M50B family. Zn(2+) serves as cofactor.

It is found in the cell inner membrane. This Mesorhizobium japonicum (strain LMG 29417 / CECT 9101 / MAFF 303099) (Mesorhizobium loti (strain MAFF 303099)) protein is Putative zinc metalloprotease mll0638.